The primary structure comprises 79 residues: DNA-directed RNA polymerase subunit omega (79 aa).

This sequence belongs to the RNA polymerase subunit omega family. In terms of assembly, the RNAP catalytic core consists of 2 alpha, 1 beta, 1 beta' and 1 omega subunit. When a sigma factor is associated with the core the holoenzyme is formed, which can initiate transcription.

The enzyme catalyses RNA(n) + a ribonucleoside 5'-triphosphate = RNA(n+1) + diphosphate. Functionally, promotes RNA polymerase assembly. Latches the N- and C-terminal regions of the beta' subunit thereby facilitating its interaction with the beta and alpha subunits. The protein is DNA-directed RNA polymerase subunit omega of Kosmotoga olearia (strain ATCC BAA-1733 / DSM 21960 / TBF 19.5.1).